We begin with the raw amino-acid sequence, 368 residues long: G-protein coupled receptor 183-A (368 aa).

Residues 1 to 27 (METTSANFTQNDSNVCTNLYNHRGWAQ) are Extracellular-facing. 2 N-linked (GlcNAc...) asparagine glycosylation sites follow: Asn-7 and Asn-11. The chain crosses the membrane as a helical span at residues 28–53 (YFLPAMYSLICIVGLLGNVLALHVIW). Topologically, residues 54 to 73 (PNLKKINSTTLYSANLVVSD) are cytoplasmic. A helical transmembrane segment spans residues 74 to 91 (ILFSLALPLRVVYYARGF). Residues 92–101 (DWPMGEGLCK) are Extracellular-facing. Cys-100 and Cys-178 are disulfide-bonded. The helical transmembrane segment at 102-123 (AVALLFYINMYAGVNFMTCLSV) threads the bilayer. Residues 124–145 (DRFIAVVLPLRFSRFRKVQKVR) lie on the Cytoplasmic side of the membrane. A helical membrane pass occupies residues 146–164 (YICGVVWVVVLMQTLPLLS). The Extracellular segment spans residues 165–189 (MPMTNIEQSGHITCMEYPNFEKIDN). A helical membrane pass occupies residues 190-212 (LPVMLIGAVVLGFGIPVITILVC). The Cytoplasmic segment spans residues 213-238 (YTALCLKLRHLAKSNKLTEKSGRSSK). Residues 239–262 (AIGVICTVILVFVVCYSPYHVDLL) form a helical membrane-spanning segment. Residues 263–282 (QYMIKKLRYDPDCSELHKFQ) lie on the Extracellular side of the membrane. The chain crosses the membrane as a helical span at residues 283-307 (ISLHITVCFMNLNSCLDPFIYFFAC). Residues 308–368 (KGYKKKVLKL…SSVLLNSLEQ (61 aa)) lie on the Cytoplasmic side of the membrane.

The protein belongs to the G-protein coupled receptor 1 family.

It is found in the cell membrane. Its function is as follows. G-protein coupled receptor expressed in lymphocytes that acts as a chemotactic receptor for B-cells, T-cells, splenic dendritic cells, monocytes/macrophages and astrocytes. Receptor for oxysterol 7-alpha,25-dihydroxycholesterol (7-alpha,25-OHC) and other related oxysterols. Mediates cell positioning and movement of a number of cells by binding the 7-alpha,25-OHC ligand that forms a chemotactic gradient. Binding of 7-alpha,25-OHC mediates the correct localization of B-cells during humoral immune responses. The protein is G-protein coupled receptor 183-A (gpr183a) of Danio rerio (Zebrafish).